The sequence spans 352 residues: Fc receptor-like A (352 aa).

An N-terminal signal peptide occupies residues 1–30 (MKLSCTLTQWALYVCPAVLLATQMLLAASS). Residues 46–65 (CQAAAEEDEGDEDDGDMTQS) are disordered. Positions 50-61 (AEEDEGDEDDGD) are enriched in acidic residues. 2 Ig-like C2-type domains span residues 80-169 (PFHL…EAAS) and 182-260 (PVLK…RQIS). Intrachain disulfides connect cysteine 109-cysteine 153 and cysteine 202-cysteine 250. Residues 275-310 (KPTASETPPTEALGPLPPPPASSAEQPRFSSPDPHL) are disordered.

In terms of assembly, monomer or homodimer; disulfide-linked. In terms of tissue distribution, highly expressed in spleen. Expressed in immature B-cell and B-cell lines.

It localises to the cytoplasm. Its function is as follows. May be implicated in B-cell differentiation and lymphomagenesis. This is Fc receptor-like A (Fcrla) from Mus musculus (Mouse).